Reading from the N-terminus, the 462-residue chain is GTPase Der (462 aa).

EngA-type G domains lie at 2–164 (QKVI…EEKV) and 198–369 (IRVG…KNYT). Residues 8–15 (GKPNVGKS), 55–59 (DSGGL), 116–119 (NKID), 204–211 (GRVNVGKS), 251–255 (DTAGI), and 315–318 (NKWD) contribute to the GTP site. The KH-like domain maps to 370-454 (QKIQTSKLNE…PIVLIPKKRG (85 aa)).

This sequence belongs to the TRAFAC class TrmE-Era-EngA-EngB-Septin-like GTPase superfamily. EngA (Der) GTPase family. In terms of assembly, associates with the 50S ribosomal subunit.

GTPase that plays an essential role in the late steps of ribosome biogenesis. This Campylobacter concisus (strain 13826) protein is GTPase Der.